We begin with the raw amino-acid sequence, 210 residues long: Cytochrome c biogenesis ATP-binding export protein CcmA (210 aa).

The ABC transporter domain occupies leucine 3–leucine 205. Position 37–44 (glycine 37–threonine 44) interacts with ATP.

It belongs to the ABC transporter superfamily. CcmA exporter (TC 3.A.1.107) family. The complex is composed of two ATP-binding proteins (CcmA) and two transmembrane proteins (CcmB).

Its subcellular location is the cell inner membrane. The enzyme catalyses heme b(in) + ATP + H2O = heme b(out) + ADP + phosphate + H(+). Its function is as follows. Part of the ABC transporter complex CcmAB involved in the biogenesis of c-type cytochromes; once thought to export heme, this seems not to be the case, but its exact role is uncertain. Responsible for energy coupling to the transport system. This Pseudomonas putida (strain ATCC 47054 / DSM 6125 / CFBP 8728 / NCIMB 11950 / KT2440) protein is Cytochrome c biogenesis ATP-binding export protein CcmA.